We begin with the raw amino-acid sequence, 251 residues long: Derlin-1 (251 aa).

Ser-2 carries the N-acetylserine modification. Residues 2-15 (SDIGDWFRSIPAIT) lie on the Cytoplasmic side of the membrane. A helical membrane pass occupies residues 16–31 (RYWFAATVAVPLVGKL). The Lumenal segment spans residues 32–69 (GLISPAYLFLWPEAFLYRFQIWRPITATFYFPVGPGTG). Residues 70-89 (FLYLVNLYFLYQYSTRLETG) form a helical membrane-spanning segment. The Cytoplasmic segment spans residues 90–94 (AFDGR). A helical membrane pass occupies residues 95–115 (PADYLFMLLFNWICIVITGLA). Residues 116–122 (MDMQLLM) lie on the Lumenal side of the membrane. The helical transmembrane segment at 123-137 (IPLIMSVLYVWAQLN) threads the bilayer. Topologically, residues 138–154 (RDMIVSFWFGTRFKACY) are cytoplasmic. The helical transmembrane segment at 155-166 (LPWVILGFNYII) threads the bilayer. Topologically, residues 167–170 (GGSV) are lumenal. A helical transmembrane segment spans residues 171–189 (INELIGNLVGHLYFFLMFR). Residues 190–251 (YPMDLGGRNF…WGQGFRLGDQ (62 aa)) are Cytoplasmic-facing. Residue Ser-201 is modified to Phosphoserine. Phosphothreonine is present on Thr-202. Position 226 is a phosphoserine (Ser-226). Positions 229-251 (RAADQNGGGGRHNWGQGFRLGDQ) are disordered. The short motif at 241-248 (NWGQGFRL) is the SHP-box element.

The protein belongs to the derlin family. As to quaternary structure, homotetramer. The four subunits of the tetramer are arranged in a twofold symmetry. Forms heterooligomers with DERL2 and DERL3; binding to DERL3 is poorer than that between DERL2 and DERL3. Interacts (via SHP-box motif) with VCP. Interacts with AMFR, SELENOS, SEL1L, SELENOK and SYVN1, as well as with SEL1L-SYVN1 and VCP-SELENOS protein complexes; this interaction is weaker than that observed between DERL2 and these complexes. Interacts with NGLY1 and YOD1. Does not bind to EDEM1. Interacts with DNAJB9. Interacts with RNF103. Interacts with HM13. Interacts with XBP1 isoform 1 (via luminal/ectodomain domain); the interaction obviates the need for ectodomain shedding prior HM13/SPP-mediated XBP1 isoform 1 cleavage. Interacts with the signal recognition particle/SRP and the SRP receptor; in the process of endoplasmic reticulum stress-induced pre-emptive quality control. May interact with UBXN6. Interacts with ZFAND2B; probably through VCP. Interacts with CCDC47. Interacts with C18orf32. May interact with TRAM1. Forms a complex with SVIP and VCP/p97. In terms of assembly, (Microbial infection) Interacts with the cytomegalovirus US11 protein. Ubiquitous.

The protein resides in the endoplasmic reticulum membrane. Its function is as follows. Functional component of endoplasmic reticulum-associated degradation (ERAD) for misfolded lumenal proteins. Forms homotetramers which encircle a large channel traversing the endoplasmic reticulum (ER) membrane. This allows the retrotranslocation of misfolded proteins from the ER into the cytosol where they are ubiquitinated and degraded by the proteasome. The channel has a lateral gate within the membrane which provides direct access to membrane proteins with no need to reenter the ER lumen first. May mediate the interaction between VCP and the misfolded protein. Also involved in endoplasmic reticulum stress-induced pre-emptive quality control, a mechanism that selectively attenuates the translocation of newly synthesized proteins into the endoplasmic reticulum and reroutes them to the cytosol for proteasomal degradation. By controlling the steady-state expression of the IGF1R receptor, indirectly regulates the insulin-like growth factor receptor signaling pathway. In terms of biological role, (Microbial infection) In case of infection by cytomegaloviruses, it plays a central role in the export from the ER and subsequent degradation of MHC class I heavy chains via its interaction with US11 viral protein, which recognizes and associates with MHC class I heavy chains. Also participates in the degradation process of misfolded cytomegalovirus US2 protein. This Homo sapiens (Human) protein is Derlin-1.